The chain runs to 604 residues: Ectonucleoside triphosphate diphosphohydrolase 7 (604 aa).

The Cytoplasmic portion of the chain corresponds to 1–28 (MARISFSYLCPASWYFTVPTVSPFLRQR). Residues 29-49 (VAFLGLFFISCLLLLMLIIDF) form a helical membrane-spanning segment. At 50–546 (RHWSASLPRD…QAHGSWFRLS (497 aa)) the chain is on the vesicular side. The active-site Proton acceptor is the Glu-217. Residue Asn-330 is glycosylated (N-linked (GlcNAc...) asparagine). An intrachain disulfide couples Cys-448 to Cys-477. Residues 547–567 (FVYNHYLFFACILVVLLAIFL) traverse the membrane as a helical segment. Residues 568–604 (YLLRLRRIHHRQTRASAPLDLLWLEEVVPMMGVQVGP) lie on the Cytoplasmic side of the membrane.

Belongs to the GDA1/CD39 NTPase family. Requires Ca(2+) as cofactor. Mg(2+) is required as a cofactor.

It is found in the cytoplasmic vesicle membrane. The enzyme catalyses a ribonucleoside 5'-triphosphate + H2O = a ribonucleoside 5'-diphosphate + phosphate + H(+). The catalysed reaction is UTP + H2O = UDP + phosphate + H(+). It carries out the reaction GTP + H2O = GDP + phosphate + H(+). It catalyses the reaction CTP + H2O = CDP + phosphate + H(+). Its function is as follows. Catalyzes the hydrolysis of nucleoside triphosphates and diphosphates in a calcium- or magnesium-dependent manner. Preferentially hydrolyzes nucleoside 5'-triphosphates, with substrate preference for UTP &gt; GTP &gt; CTP. Hydrolyzes ATP and nucleoside diphosphates only to a minor extent. This is Ectonucleoside triphosphate diphosphohydrolase 7 (ENTPD7) from Homo sapiens (Human).